The sequence spans 476 residues: RuvB-like helicase 2 (476 aa).

Residue 76–83 (GPPSTGKT) coordinates ATP.

The protein belongs to the RuvB family. May form heterododecamers with RVB1. Component of the SWR1 chromatin remodeling complex, the INO80 chromatin remodeling complex, and of the R2TP complex.

Its subcellular location is the nucleus. It catalyses the reaction ATP + H2O = ADP + phosphate + H(+). In terms of biological role, DNA helicase which participates in several chromatin remodeling complexes, including the SWR1 and the INO80 complexes. The SWR1 complex mediates the ATP-dependent exchange of histone H2A for the H2A variant HZT1 leading to transcriptional regulation of selected genes by chromatin remodeling. The INO80 complex remodels chromatin by shifting nucleosomes and is involved in DNA repair. Also involved in pre-rRNA processing. This chain is RuvB-like helicase 2 (RVB2), found in Candida glabrata (strain ATCC 2001 / BCRC 20586 / JCM 3761 / NBRC 0622 / NRRL Y-65 / CBS 138) (Yeast).